The sequence spans 791 residues: von Willebrand factor A domain-containing protein 2 (791 aa).

The signal sequence occupies residues 1–23 (MPPLLLLPAIYMLLFFRVSPTIS). Positions 51–221 (DILFLLDGSH…DATNGLLSTL (171 aa)) constitute a VWFA 1 domain. N146 is a glycosylation site (N-linked (GlcNAc...) asparagine). The region spanning 295–332 (PGPCDSQPCQNGGTCIPEGVDRYHCLCPLAFGGEVNCA) is the EGF-like 1 domain. Disulfide bonds link C298–C309, C303–C319, and C321–C331. 2 VWFA domains span residues 342–516 (DVLF…QRRL) and 530–704 (DLVF…IEWL). The EGF-like 2 domain maps to 711–747 (PVNLCKPSPCMNEGTCVLKNGSYRCECRGGWEGPHCE). Disulfide bonds link C715-C726, C720-C735, and C737-C746. Positions 762-791 (HQEPAGLQGPTPSQQAPKHLRIGKALSSAK) are disordered.

Forms monomers and multimers. In terms of tissue distribution, detected in uterus, kidney, and skin. Also detected in intestine and lung of adult mice, and in calvaria, femur, brain, heart, intestine, skeletal muscle, and lung of newborn mice.

It is found in the secreted. The protein is von Willebrand factor A domain-containing protein 2 (Vwa2) of Mus musculus (Mouse).